Here is a 323-residue protein sequence, read N- to C-terminus: DNA-directed RNA polymerase subunit alpha 1 (323 aa).

Positions 1 to 228 (MSNNNSKLEF…EQISVFVSLR (228 aa)) are alpha N-terminal domain (alpha-NTD). The alpha C-terminal domain (alpha-CTD) stretch occupies residues 244-323 (IDPILLKPID…DNFRELVEGK (80 aa)).

It belongs to the RNA polymerase alpha chain family. Homodimer. The RNAP catalytic core consists of 2 alpha, 1 beta, 1 beta' and 1 omega subunit. When a sigma factor is associated with the core the holoenzyme is formed, which can initiate transcription.

The enzyme catalyses RNA(n) + a ribonucleoside 5'-triphosphate = RNA(n+1) + diphosphate. Functionally, DNA-dependent RNA polymerase catalyzes the transcription of DNA into RNA using the four ribonucleoside triphosphates as substrates. The sequence is that of DNA-directed RNA polymerase subunit alpha 1 from Francisella tularensis subsp. tularensis (strain FSC 198).